Here is a 343-residue protein sequence, read N- to C-terminus: Holliday junction branch migration complex subunit RuvB (343 aa).

Positions 1–181 (MDRIIDTAAT…FGIVQRLEFY (181 aa)) are large ATPase domain (RuvB-L). Residues I20, R21, G62, K65, T66, T67, 128-130 (EDF), R171, Y181, and R218 each bind ATP. Residue T66 coordinates Mg(2+). Residues 182-252 (SPEDLARIVR…VAQAAMQMLK (71 aa)) are small ATPAse domain (RuvB-S). Residues 255-343 (QGGFDELDRR…SAFTDPEDLF (89 aa)) are head domain (RuvB-H). Residues R291, R310, and R315 each contribute to the DNA site.

This sequence belongs to the RuvB family. As to quaternary structure, homohexamer. Forms an RuvA(8)-RuvB(12)-Holliday junction (HJ) complex. HJ DNA is sandwiched between 2 RuvA tetramers; dsDNA enters through RuvA and exits via RuvB. An RuvB hexamer assembles on each DNA strand where it exits the tetramer. Each RuvB hexamer is contacted by two RuvA subunits (via domain III) on 2 adjacent RuvB subunits; this complex drives branch migration. In the full resolvosome a probable DNA-RuvA(4)-RuvB(12)-RuvC(2) complex forms which resolves the HJ.

It is found in the cytoplasm. The catalysed reaction is ATP + H2O = ADP + phosphate + H(+). Its function is as follows. The RuvA-RuvB-RuvC complex processes Holliday junction (HJ) DNA during genetic recombination and DNA repair, while the RuvA-RuvB complex plays an important role in the rescue of blocked DNA replication forks via replication fork reversal (RFR). RuvA specifically binds to HJ cruciform DNA, conferring on it an open structure. The RuvB hexamer acts as an ATP-dependent pump, pulling dsDNA into and through the RuvAB complex. RuvB forms 2 homohexamers on either side of HJ DNA bound by 1 or 2 RuvA tetramers; 4 subunits per hexamer contact DNA at a time. Coordinated motions by a converter formed by DNA-disengaged RuvB subunits stimulates ATP hydrolysis and nucleotide exchange. Immobilization of the converter enables RuvB to convert the ATP-contained energy into a lever motion, pulling 2 nucleotides of DNA out of the RuvA tetramer per ATP hydrolyzed, thus driving DNA branch migration. The RuvB motors rotate together with the DNA substrate, which together with the progressing nucleotide cycle form the mechanistic basis for DNA recombination by continuous HJ branch migration. Branch migration allows RuvC to scan DNA until it finds its consensus sequence, where it cleaves and resolves cruciform DNA. The protein is Holliday junction branch migration complex subunit RuvB of Xylella fastidiosa (strain 9a5c).